Consider the following 278-residue polypeptide: MSVPTVLEKILARKAEEVAERSARVSLAELETLARAADAPRGFARALQDQVKLKQPAVIAEIKKASPSKGVIRENFVPADIAKSYEKGGATCLSVLTDVDYFQGADAYLQQARAACKLPVIRKDFMIDPYQIVEARALGADCVLLIVAALDDARMAELAAVAKGVGLDVLVEVHDGDELERALKTLDTPLVGVNNRNLHTFEVNLETTLDLLPRIPRERLVITESGILNRADVELMEISDVYSFLVGEAFMRAESPGSELQRLFFPERGVPVSGSTLD.

The protein belongs to the TrpC family.

The catalysed reaction is 1-(2-carboxyphenylamino)-1-deoxy-D-ribulose 5-phosphate + H(+) = (1S,2R)-1-C-(indol-3-yl)glycerol 3-phosphate + CO2 + H2O. It participates in amino-acid biosynthesis; L-tryptophan biosynthesis; L-tryptophan from chorismate: step 4/5. The sequence is that of Indole-3-glycerol phosphate synthase from Pseudomonas fluorescens (strain ATCC BAA-477 / NRRL B-23932 / Pf-5).